A 995-amino-acid chain; its full sequence is UPF0182 protein MMAR_1371 (995 aa).

7 consecutive transmembrane segments (helical) span residues 18 to 38 (VLIL…RLID), 63 to 83 (FLVF…GLAL), 113 to 133 (LFGI…AQSY), 175 to 195 (FVAI…FGGI), 210 to 230 (IQLV…YWLD), 259 to 279 (KLIL…AIVL), and 287 to 307 (IGLV…PMIV). The tract at residues 900-948 (AATGIQPTEGGAPANVPPNNAPSPEALPGTPPSPPTAVPPAPEASVTLS) is disordered. Residues 928 to 941 (GTPPSPPTAVPPAP) show a composition bias toward pro residues.

The protein belongs to the UPF0182 family.

It localises to the cell membrane. The polypeptide is UPF0182 protein MMAR_1371 (Mycobacterium marinum (strain ATCC BAA-535 / M)).